A 140-amino-acid chain; its full sequence is Hemoglobin subunit alpha-D (140 aa).

The Globin domain maps to 1 to 140 (MLTDSDKKLV…VCTVLAEKYR (140 aa)). Heme b-binding residues include histidine 57 and histidine 86.

It belongs to the globin family. In terms of assembly, heterotetramer of two alpha-D chains and two beta chains. In terms of tissue distribution, red blood cells.

Its function is as follows. Involved in oxygen transport from the lung to the various peripheral tissues. The sequence is that of Hemoglobin subunit alpha-D (HBAD) from Columba livia (Rock dove).